We begin with the raw amino-acid sequence, 2110 residues long: Protein Ycf2 (2110 aa).

The interval 190–209 is disordered; it reads DSSQLKGSSDQSRDPLDSIS. 1442–1449 provides a ligand contact to ATP; sequence GSIGTGRS.

Belongs to the Ycf2 family.

It localises to the plastid. It is found in the chloroplast stroma. In terms of biological role, probable ATPase of unknown function. Its presence in a non-photosynthetic plant (Epifagus virginiana) and experiments in tobacco indicate that it has an essential function which is probably not related to photosynthesis. The polypeptide is Protein Ycf2 (Panax ginseng (Korean ginseng)).